The following is a 507-amino-acid chain: Glucose transporter type 3 (507 aa).

The disordered stretch occupies residues methionine 1–alanine 26. Over methionine 1–lysine 53 the chain is Cytoplasmic. Residues alanine 54–threonine 74 form a helical membrane-spanning segment. Topologically, residues alanine 75–serine 95 are extracellular. Residues glycine 96–valine 116 form a helical membrane-spanning segment. The Cytoplasmic segment spans residues arginine 117–threonine 124. A helical transmembrane segment spans residues isoleucine 125–valine 145. Residues proline 146 to arginine 152 are Extracellular-facing. The helical transmembrane segment at phenylalanine 153–isoleucine 173 threads the bilayer. Topologically, residues serine 174 to glycine 183 are cytoplasmic. The helical transmembrane segment at valine 184–leucine 204 threads the bilayer. The Extracellular segment spans residues glutamate 205–arginine 207. A helical transmembrane segment spans residues isoleucine 208 to glutamate 228. At serine 229–arginine 293 the chain is on the cytoplasmic side. Residues serine 294–leucine 314 form a helical membrane-spanning segment. The Extracellular portion of the chain corresponds to asparagine 315 to arginine 324. A helical membrane pass occupies residues glutamate 325 to valine 345. Over aspartate 346–arginine 351 the chain is Cytoplasmic. The chain crosses the membrane as a helical span at residues proline 352–phenylalanine 372. Residues lysine 373–valine 374 lie on the Extracellular side of the membrane. A helical transmembrane segment spans residues tryptophan 375–valine 395. The Cytoplasmic segment spans residues glycine 396–proline 420. The helical transmembrane segment at leucine 421 to phenylalanine 441 threads the bilayer. Over glycine 442–proline 450 the chain is Extracellular. Residues tyrosine 451–isoleucine 471 form a helical membrane-spanning segment. At proline 472–alanine 507 the chain is on the cytoplasmic side.

Belongs to the major facilitator superfamily. Sugar transporter (TC 2.A.1.1) family. Glucose transporter subfamily.

It is found in the cell membrane. The protein resides in the perikaryon. It localises to the cell projection. Facilitative glucose transporter that can also mediate the uptake of various other monosaccharides across the cell membrane. The polypeptide is Glucose transporter type 3 (Glut3) (Drosophila melanogaster (Fruit fly)).